The primary structure comprises 650 residues: Acetyl-coenzyme A synthetase (650 aa).

Residues 191 to 194 (RGGR), Thr-311, and Asn-335 each bind CoA. ATP contacts are provided by residues 387 to 389 (GEP), 411 to 416 (DTWWQT), Asp-501, and Arg-516. CoA is bound at residue Ser-524. Arg-527 is an ATP binding site. Val-538, His-540, and Ile-543 together coordinate Mg(2+). A CoA-binding site is contributed by Arg-585. An N6-acetyllysine modification is found at Lys-610.

This sequence belongs to the ATP-dependent AMP-binding enzyme family. It depends on Mg(2+) as a cofactor. Acetylated. Deacetylation by the SIR2-homolog deacetylase activates the enzyme.

It catalyses the reaction acetate + ATP + CoA = acetyl-CoA + AMP + diphosphate. Its function is as follows. Catalyzes the conversion of acetate into acetyl-CoA (AcCoA), an essential intermediate at the junction of anabolic and catabolic pathways. AcsA undergoes a two-step reaction. In the first half reaction, AcsA combines acetate with ATP to form acetyl-adenylate (AcAMP) intermediate. In the second half reaction, it can then transfer the acetyl group from AcAMP to the sulfhydryl group of CoA, forming the product AcCoA. In Vibrio vulnificus (strain YJ016), this protein is Acetyl-coenzyme A synthetase.